The chain runs to 481 residues: Aspartyl/glutamyl-tRNA(Asn/Gln) amidotransferase subunit B (481 aa).

It belongs to the GatB/GatE family. GatB subfamily. As to quaternary structure, heterotrimer of A, B and C subunits.

The enzyme catalyses L-glutamyl-tRNA(Gln) + L-glutamine + ATP + H2O = L-glutaminyl-tRNA(Gln) + L-glutamate + ADP + phosphate + H(+). The catalysed reaction is L-aspartyl-tRNA(Asn) + L-glutamine + ATP + H2O = L-asparaginyl-tRNA(Asn) + L-glutamate + ADP + phosphate + 2 H(+). In terms of biological role, allows the formation of correctly charged Asn-tRNA(Asn) or Gln-tRNA(Gln) through the transamidation of misacylated Asp-tRNA(Asn) or Glu-tRNA(Gln) in organisms which lack either or both of asparaginyl-tRNA or glutaminyl-tRNA synthetases. The reaction takes place in the presence of glutamine and ATP through an activated phospho-Asp-tRNA(Asn) or phospho-Glu-tRNA(Gln). The protein is Aspartyl/glutamyl-tRNA(Asn/Gln) amidotransferase subunit B of Pseudomonas putida (strain ATCC 700007 / DSM 6899 / JCM 31910 / BCRC 17059 / LMG 24140 / F1).